A 422-amino-acid chain; its full sequence is 5'-deoxyadenosine deaminase (422 aa).

2 residues coordinate Zn(2+): H57 and H59. Substrate-binding residues include E86 and H178. H205 lines the Zn(2+) pocket. Positions 208 and 294 each coordinate substrate. D294 lines the Zn(2+) pocket.

Belongs to the metallo-dependent hydrolases superfamily. MTA/SAH deaminase family. In terms of assembly, homotetramer. Zn(2+) serves as cofactor.

It catalyses the reaction 5'-deoxyadenosine + H2O + H(+) = 5'-deoxyinosine + NH4(+). The catalysed reaction is S-adenosyl-L-homocysteine + H2O + H(+) = S-inosyl-L-homocysteine + NH4(+). It carries out the reaction S-methyl-5'-thioadenosine + H2O + H(+) = S-methyl-5'-thioinosine + NH4(+). The enzyme catalyses adenosine + H2O + H(+) = inosine + NH4(+). The protein operates within amino-acid biosynthesis; S-adenosyl-L-methionine biosynthesis. Catalyzes the deamination of three SAM-derived enzymatic products, namely 5'-deoxyadenosine, S-adenosyl-L-homocysteine, and 5'-methylthioadenosine, to produce the inosine analogs. Can also deaminate adenosine. The preferred substrate for this enzyme is 5'-deoxyadenosine, but all these substrates are efficiently deaminated. Likely functions in a S-adenosyl-L-methionine (SAM) recycling pathway from S-adenosyl-L-homocysteine (SAH) produced from SAM-dependent methylation reactions. May also be involved in the recycling of 5'-deoxyadenosine, whereupon the 5'-deoxyribose moiety of 5'-deoxyinosine is further metabolized to deoxyhexoses used for the biosynthesis of aromatic amino acids in methanogens. The chain is 5'-deoxyadenosine deaminase from Methanococcus maripaludis (strain DSM 14266 / JCM 13030 / NBRC 101832 / S2 / LL).